The chain runs to 419 residues: Transcription termination factor Rho (419 aa).

One can recognise a Rho RNA-BD domain in the interval 48 to 123 (DIFGDGVLEI…LKVNKVNYDK (76 aa)). RNA-binding regions lie at residues 61–66 (GFGFLR), 78–80 (DIY), and 108–110 (ERY). Residues 169 to 174 (GRGQRG), 181 to 186 (KAGKTM), and R212 contribute to the ATP site. An RNA-binding 2 region spans residues 284-288 (VLTGG).

This sequence belongs to the Rho family. As to quaternary structure, homohexamer. The homohexamer assembles into an open ring structure.

In terms of biological role, facilitates transcription termination by a mechanism that involves Rho binding to the nascent RNA, activation of Rho's RNA-dependent ATPase activity, and release of the mRNA from the DNA template. The protein is Transcription termination factor Rho of Buchnera aphidicola subsp. Baizongia pistaciae (strain Bp).